Reading from the N-terminus, the 141-residue chain is Cholinesterase (141 aa).

A glycan (N-linked (GlcNAc...) asparagine) is linked at Asn39. Residue 49 to 50 coordinates substrate; sequence GG. The active-site Acyl-ester intermediate is the Ser131. A Phosphoserine modification is found at Ser131.

Belongs to the type-B carboxylesterase/lipase family. In terms of assembly, homotetramer; disulfide-linked. Dimer of dimers. In terms of tissue distribution, present in most cells except erythrocytes.

The protein localises to the secreted. It catalyses the reaction an acylcholine + H2O = a carboxylate + choline + H(+). Functionally, esterase with broad substrate specificity. Contributes to the inactivation of the neurotransmitter acetylcholine. Can degrade neurotoxic organophosphate esters. This Macaca mulatta (Rhesus macaque) protein is Cholinesterase (BCHE).